Reading from the N-terminus, the 336-residue chain is DNA repair protein XRCC4 (336 aa).

Positions 1 to 213 (MERKISRIHL…EREKDIKQEG (213 aa)) are interaction with IFFO1. At Ser53 the chain carries Phosphoserine; by PRKDC. Coiled-coil stretches lie at residues 131 to 165 (LDTI…FEKC) and 184 to 212 (LNEK…IKQE). An interaction with LIG4 region spans residues 180–213 (FILVLNEKKTKIRSLHNKLLNAAQEREKDIKQEG). Residue Ser193 is modified to Phosphoserine; by PRKDC. Residue Lys210 forms a Glycyl lysine isopeptide (Lys-Gly) (interchain with G-Cter in SUMO) linkage. The interval 212–249 (EGETAICSEMTADRDPVYDESTDEESENQTDLSGLASA) is disordered. Tyr229 is modified (phosphotyrosine). Over residues 229 to 239 (YDESTDEESEN) the composition is skewed to acidic residues. Ser232 carries the post-translational modification Phosphoserine. A Phosphothreonine; by CK2 modification is found at Thr233. Ser237 and Ser256 each carry phosphoserine. A Phosphoserine; by PRKDC modification is found at Ser260. The segment at 264–336 (TDIAPSRKRR…SSPEDLFDEI (73 aa)) is disordered. The short motif at 270 to 275 (RKRRQR) is the Nuclear localization signal element. Lys296 participates in a covalent cross-link: Glycyl lysine isopeptide (Lys-Gly) (interchain with G-Cter in ubiquitin). A phosphoserine; by PRKDC mark is found at Ser303, Ser304, Ser315, and Ser320. Positions 317-329 (ENMSLETLRNSSP) are enriched in polar residues. Thr323 is modified (phosphothreonine; by PRKDC). Phosphoserine; by PRKDC is present on residues Ser327 and Ser328.

This sequence belongs to the XRCC4-XLF family. XRCC4 subfamily. Homodimer and homotetramer in solution. Interacts with NHEJ1/XLF; the interaction is direct and is mediated via a head-to-head interaction between N-terminal head regions. Interacts with LIG4; the LIG4-XRCC4 subcomplex has a 1:2 stoichiometry and XRCC4 is required for LIG4 stability. Component of the core long-range non-homologous end joining (NHEJ) complex (also named DNA-PK complex) composed of PRKDC, LIG4, XRCC4, XRCC6/Ku70, XRCC5/Ku86 and NHEJ1/XLF. Additional component of the NHEJ complex includes PAXX. Following autophosphorylation, PRKDC dissociates from DNA, leading to formation of the short-range NHEJ complex, composed of LIG4, XRCC4, XRCC6/Ku70, XRCC5/Ku86 and NHEJ1/XLF. Interacts with PRKDC; the interaction is direct. Interacts with XRCC6/Ku70; the interaction is direct. Interacts with APTX and APLF. Forms a heterotetramer with IFFO1; the interaction involves LIG4-free XRCC4 and leads to the relocalization of IFFO1 to the sites of DNA damage. Interacts with PNKP; mainly interacts with PNKP when phosphorylated at Thr-233, but is also able to interact at much lower level with PNKP when not unphosphorylated. Interacts with POLL (DNA polymerase lambda). As to quaternary structure, interacts with XKR4; interacts with the processed form of XKR4, which is cleaved by caspase. Post-translationally, phosphorylated by PRKDC at the C-terminus in response to DNA damage; Ser-260 and Ser-320 constitute the main phosphorylation sites. Phosphorylations by PRKDC at the C-terminus of XRCC4 and NHEJ1/XLF are highly redundant and regulate ability of the XRCC4-NHEJ1/XLF subcomplex to bridge DNA. Phosphorylation by PRKDC does not prevent interaction with NHEJ1/XLF but disrupts ability to bridge DNA and promotes detachment from DNA. Phosphorylation at Ser-327 and Ser-328 by PRKDC promotes recognition by the SCF(FBXW7) complex and subsequent ubiquitination via 'Lys-63'-linked ubiquitin. Phosphorylation at Thr-233 by CK2 promotes interaction with PNKP; regulating PNKP activity and localization to DNA damage sites. Phosphorylation by CK2 promotes interaction with APTX. Ubiquitinated at Lys-296 by the SCF(FBXW7) complex via 'Lys-63'-linked ubiquitination, thereby promoting double-strand break repair: the SCF(FBXW7) complex specifically recognizes XRCC4 when phosphorylated at Ser-327 and Ser-328 by PRKDC, and 'Lys-63'-linked ubiquitination facilitates DNA non-homologous end joining (NHEJ) by enhancing association with XRCC5/Ku80 and XRCC6/Ku70. Monoubiquitinated. In terms of processing, undergoes proteolytic processing by caspase-3 (CASP3). This generates the protein XRCC4, C-terminus (XRCC4/C), which translocates to the cytoplasm and activates phospholipid scramblase activity of XKR4, thereby promoting phosphatidylserine exposure on apoptotic cell surface. As to expression, widely expressed.

The protein resides in the nucleus. It localises to the chromosome. It is found in the cytoplasm. Functionally, DNA non-homologous end joining (NHEJ) core factor, required for double-strand break repair and V(D)J recombination. Acts as a scaffold protein that regulates recruitment of other proteins to DNA double-strand breaks (DSBs). Associates with NHEJ1/XLF to form alternating helical filaments that bridge DNA and act like a bandage, holding together the broken DNA until it is repaired. The XRCC4-NHEJ1/XLF subcomplex binds to the DNA fragments of a DSB in a highly diffusive manner and robustly bridges two independent DNA molecules, holding the broken DNA fragments in close proximity to one other. The mobility of the bridges ensures that the ends remain accessible for further processing by other repair factors. Plays a key role in the NHEJ ligation step of the broken DNA during DSB repair via direct interaction with DNA ligase IV (LIG4): the LIG4-XRCC4 subcomplex reseals the DNA breaks after the gap filling is completed. XRCC4 stabilizes LIG4, regulates its subcellular localization and enhances LIG4's joining activity. Binding of the LIG4-XRCC4 subcomplex to DNA ends is dependent on the assembly of the DNA-dependent protein kinase complex DNA-PK to these DNA ends. Promotes displacement of PNKP from processed strand break termini. Acts as an activator of the phospholipid scramblase activity of XKR4. This form, which is generated upon caspase-3 (CASP3) cleavage, translocates into the cytoplasm and interacts with XKR4, thereby promoting phosphatidylserine scramblase activity of XKR4 and leading to phosphatidylserine exposure on apoptotic cell surface. The polypeptide is DNA repair protein XRCC4 (Homo sapiens (Human)).